The following is a 521-amino-acid chain: Bifunctional purine biosynthesis protein PurH (521 aa).

Residues 1-145 (MIKQALISVS…KNHRDVTVVV (145 aa)) form the MGS-like domain.

Belongs to the PurH family.

The catalysed reaction is (6R)-10-formyltetrahydrofolate + 5-amino-1-(5-phospho-beta-D-ribosyl)imidazole-4-carboxamide = 5-formamido-1-(5-phospho-D-ribosyl)imidazole-4-carboxamide + (6S)-5,6,7,8-tetrahydrofolate. The enzyme catalyses IMP + H2O = 5-formamido-1-(5-phospho-D-ribosyl)imidazole-4-carboxamide. The protein operates within purine metabolism; IMP biosynthesis via de novo pathway; 5-formamido-1-(5-phospho-D-ribosyl)imidazole-4-carboxamide from 5-amino-1-(5-phospho-D-ribosyl)imidazole-4-carboxamide (10-formyl THF route): step 1/1. It functions in the pathway purine metabolism; IMP biosynthesis via de novo pathway; IMP from 5-formamido-1-(5-phospho-D-ribosyl)imidazole-4-carboxamide: step 1/1. The sequence is that of Bifunctional purine biosynthesis protein PurH from Burkholderia ambifaria (strain ATCC BAA-244 / DSM 16087 / CCUG 44356 / LMG 19182 / AMMD) (Burkholderia cepacia (strain AMMD)).